Reading from the N-terminus, the 260-residue chain is MSLESLFQHIIFSEHQAEESRRLMREVRSEINRCREKIKKAAEQLNKEKIQLESKVQQFSEKAFLLQLLKTHENALERQCNEITNQRNMLLQTFEATKRRVTEEEEKFIKEITDFNNEYELTKKRERLMKENVKIQISDLENQANILKMEMKSMEHDSDLLNELQRQKNELIQELSTLQRKLKGFEDKKHEAICTTKYLEAEKIKINEKPQNDAECLRLKKELELYKEDDMQSVHDALQTEIEFLELTLAQKDHQETNNL.

The stretch at 13-194 (SEHQAEESRR…FEDKKHEAIC (182 aa)) forms a coiled coil.

It belongs to the CCDC172 family. In terms of assembly, may interact with TEKT2.

The protein localises to the cytoplasm. The protein resides in the cell projection. It localises to the cilium. The chain is Coiled-coil domain-containing protein 172 (CCDC172) from Bos taurus (Bovine).